Reading from the N-terminus, the 736-residue chain is Catalase-peroxidase 2 (736 aa).

A cross-link (tryptophyl-tyrosyl-methioninium (Trp-Tyr) (with M-253)) is located at residues 91–227 (WHSAGTYRMG…LAAVQMGLIY (137 aa)). His92 serves as the catalytic Proton acceptor. The segment at residues 227 to 253 (YVNPEGPDGNPDPVAAAYDIREVFGRM) is a cross-link (tryptophyl-tyrosyl-methioninium (Tyr-Met) (with W-91)). His268 contacts heme b.

The protein belongs to the peroxidase family. Peroxidase/catalase subfamily. As to quaternary structure, homodimer or homotetramer. Heme b serves as cofactor. In terms of processing, formation of the three residue Trp-Tyr-Met cross-link is important for the catalase, but not the peroxidase activity of the enzyme.

The enzyme catalyses H2O2 + AH2 = A + 2 H2O. It carries out the reaction 2 H2O2 = O2 + 2 H2O. Functionally, bifunctional enzyme with both catalase and broad-spectrum peroxidase activity. Shows peroxidase specificity towards odianisidine, ABTS and pyrogallol, but methoxyphenol and 2-chloronaphthol are not peroxidized. This Burkholderia cenocepacia (strain ATCC BAA-245 / DSM 16553 / LMG 16656 / NCTC 13227 / J2315 / CF5610) (Burkholderia cepacia (strain J2315)) protein is Catalase-peroxidase 2.